A 220-amino-acid chain; its full sequence is MDSASQDINLNSPNKGVLSDFMTDVPVDPGVVHRTPAVEGLTEVEEEELRAELAKVEEEIVTLRQVLAAKERHCGELKRRLGLSTLGELKQNLSRSWHDVQGSTAYVKTSEKLGEWNEKVTQSDLYKKTQETLSQAGQKTSAALSTMGSAISRKLGDMSSYSIRHSISMPVMRNSATFKSFEDRVGTIKSKVVGGRENGSDTLPSSPGSGDQTLPDHAPF.

Met-1 bears the N-acetylmethionine mark. A compositionally biased stretch (polar residues) spans 1–14 (MDSASQDINLNSPN). The disordered stretch occupies residues 1-26 (MDSASQDINLNSPNKGVLSDFMTDVP). Phosphoserine is present on residues Ser-3, Ser-12, and Ser-19. The stretch at 40–82 (GLTEVEEEELRAELAKVEEEIVTLRQVLAAKERHCGELKRRLG) forms a coiled coil. Phosphoserine is present on residues Ser-96, Ser-149, Ser-168, and Ser-175. The residue at position 177 (Thr-177) is a Phosphothreonine. The residue at position 180 (Ser-180) is a Phosphoserine. Thr-187 carries the phosphothreonine modification. The segment at 189-220 (KSKVVGGRENGSDTLPSSPGSGDQTLPDHAPF) is disordered. Polar residues predominate over residues 200–212 (SDTLPSSPGSGDQ). Ser-206 and Ser-209 each carry phosphoserine.

It belongs to the TPD52 family. As to quaternary structure, forms a homodimer or heterodimer with other members of the family. Interacts with MAL2.

This chain is Tumor protein D54 (Tpd52l2), found in Rattus norvegicus (Rat).